Reading from the N-terminus, the 101-residue chain is Small ribosomal subunit protein bS18c (101 aa).

The protein belongs to the bacterial ribosomal protein bS18 family. In terms of assembly, part of the 30S ribosomal subunit.

The protein resides in the plastid. The protein localises to the chloroplast. The sequence is that of Small ribosomal subunit protein bS18c from Aethionema grandiflorum (Persian stone-cress).